A 388-amino-acid chain; its full sequence is Cobalt-precorrin-5B C(1)-methyltransferase (388 aa).

The protein belongs to the CbiD family.

The catalysed reaction is Co-precorrin-5B + S-adenosyl-L-methionine = Co-precorrin-6A + S-adenosyl-L-homocysteine. Its pathway is cofactor biosynthesis; adenosylcobalamin biosynthesis; cob(II)yrinate a,c-diamide from sirohydrochlorin (anaerobic route): step 6/10. Its function is as follows. Catalyzes the methylation of C-1 in cobalt-precorrin-5B to form cobalt-precorrin-6A. The sequence is that of Cobalt-precorrin-5B C(1)-methyltransferase from Rubrobacter xylanophilus (strain DSM 9941 / JCM 11954 / NBRC 16129 / PRD-1).